Consider the following 644-residue polypeptide: Subversion of eukaryotic traffic protein A (644 aa).

The segment at 1-400 is glucosyltransferase; sequence MYKIYSYLGW…FHTLLSQVSD (400 aa). The ptdIns(3)P-binding and localization domain stretch occupies residues 401–644; the sequence is PVNPTAHELK…EYDNNHGLRI (244 aa).

In terms of processing, ubiquitinated and polyubiquitinated when ectopically produced in both yeast and mammalian cells; however it is unsure if this modification occurs during the L.pneumophila infection of host cells.

It is found in the secreted. Secreted effector that interferes with vesicular trafficking of host cells. Possesses glucohydrolase and mono-O-glucosyltransferase activity by using UDP-glucose as a sugar donor substrate. Is able to glucosylate histones H4 and H3.1 in vitro, but it is unlikely that histones are the natural substrates for SetA. May glycosylate a component of the host cell vesicle trafficking machinery during L.pneumophila infection. Binds with high specificity to phosphatidylinositol 3-phosphate (PtdIns(3)P), (with a dissociation constant value of 809 nM), which guides SetA to the cytosolic leaflet of the early phagosome of the host cell. The chain is Subversion of eukaryotic traffic protein A (setA) from Legionella pneumophila subsp. pneumophila (strain Philadelphia 1 / ATCC 33152 / DSM 7513).